The sequence spans 501 residues: Glycerol kinase (501 aa).

Thr-14 is a binding site for ADP. The ATP site is built by Thr-14, Thr-15, and Ser-16. Thr-14 contributes to the sn-glycerol 3-phosphate binding site. Residue Arg-18 participates in ADP binding. Arg-84, Glu-85, Tyr-135, and Asp-244 together coordinate sn-glycerol 3-phosphate. Glycerol is bound by residues Arg-84, Glu-85, Tyr-135, Asp-244, and Gln-245. Thr-266 and Gly-309 together coordinate ADP. Thr-266, Gly-309, Gln-313, and Gly-410 together coordinate ATP. Positions 410 and 414 each coordinate ADP.

The protein belongs to the FGGY kinase family.

The catalysed reaction is glycerol + ATP = sn-glycerol 3-phosphate + ADP + H(+). It participates in polyol metabolism; glycerol degradation via glycerol kinase pathway; sn-glycerol 3-phosphate from glycerol: step 1/1. With respect to regulation, inhibited by fructose 1,6-bisphosphate (FBP). Functionally, key enzyme in the regulation of glycerol uptake and metabolism. Catalyzes the phosphorylation of glycerol to yield sn-glycerol 3-phosphate. This chain is Glycerol kinase, found in Deinococcus radiodurans (strain ATCC 13939 / DSM 20539 / JCM 16871 / CCUG 27074 / LMG 4051 / NBRC 15346 / NCIMB 9279 / VKM B-1422 / R1).